A 257-amino-acid chain; its full sequence is Succinate dehydrogenase subunit 5, mitochondrial (257 aa).

A mitochondrion-targeting transit peptide spans 1 to 89 (MGTLGRAIHT…AMGMGQVRRF (89 aa)).

In terms of assembly, component of complex II composed of eight subunits in plants: four classical SDH subunits SDH1, SDH2, SDH3 and SDH4 (a flavoprotein (FP), an iron-sulfur protein (IP), and a cytochrome b composed of a large and a small subunit.), as well as four subunits unknown in mitochondria from bacteria and heterotrophic eukaryotes.

The protein localises to the mitochondrion inner membrane. Its pathway is carbohydrate metabolism; tricarboxylic acid cycle. The chain is Succinate dehydrogenase subunit 5, mitochondrial from Arabidopsis thaliana (Mouse-ear cress).